A 126-amino-acid chain; its full sequence is Protein ApaG (126 aa).

The ApaG domain maps to 2–126; that stretch reads DVIQPCIKIQ…FRLAIPNVLN (125 aa).

The chain is Protein ApaG from Vibrio campbellii (strain ATCC BAA-1116).